The primary structure comprises 433 residues: Small ribosomal subunit biogenesis GTPase RsgA 1, mitochondrial (433 aa).

Residues 1–20 (MLRAKHIGKNYSSSLSPVLS) form a disordered region. The 179-residue stretch at 113 to 291 (SEILDPPVAN…LADTPGFNQP (179 aa)) folds into the CP-type G domain. 212–220 (GPSGVGKSS) lines the GTP pocket. C317, C322, H324, and C330 together coordinate Zn(2+).

Belongs to the TRAFAC class YlqF/YawG GTPase family. RsgA subfamily. Monomer. Associates with 30S ribosomal subunit, binds 16S rRNA. Zn(2+) serves as cofactor.

It localises to the mitochondrion. Its function is as follows. One of several proteins that assist in the late maturation steps of the functional core of the 30S ribosomal subunit. Helps release RbfA from mature subunits. May play a role in the assembly of ribosomal proteins into the subunit. Circularly permuted GTPase that catalyzes slow GTP hydrolysis, GTPase activity is stimulated by the 30S ribosomal subunit. Required for embryo development. The chain is Small ribosomal subunit biogenesis GTPase RsgA 1, mitochondrial from Arabidopsis thaliana (Mouse-ear cress).